We begin with the raw amino-acid sequence, 477 residues long: Ribulose bisphosphate carboxylase large chain (477 aa).

The propeptide occupies 1–2 (MS). Proline 3 carries the post-translational modification N-acetylproline. Lysine 14 carries the post-translational modification N6,N6,N6-trimethyllysine. Residues asparagine 123 and threonine 173 each coordinate substrate. The active-site Proton acceptor is lysine 175. Position 177 (lysine 177) interacts with substrate. Mg(2+)-binding residues include lysine 201, aspartate 203, and glutamate 204. N6-carboxylysine is present on lysine 201. The Proton acceptor role is filled by histidine 294. 3 residues coordinate substrate: arginine 295, histidine 327, and serine 379.

This sequence belongs to the RuBisCO large chain family. Type I subfamily. Heterohexadecamer of 8 large chains and 8 small chains; disulfide-linked. The disulfide link is formed within the large subunit homodimers. The cofactor is Mg(2+). Post-translationally, the disulfide bond which can form in the large chain dimeric partners within the hexadecamer appears to be associated with oxidative stress and protein turnover.

It localises to the plastid. The protein localises to the chloroplast. The enzyme catalyses 2 (2R)-3-phosphoglycerate + 2 H(+) = D-ribulose 1,5-bisphosphate + CO2 + H2O. The catalysed reaction is D-ribulose 1,5-bisphosphate + O2 = 2-phosphoglycolate + (2R)-3-phosphoglycerate + 2 H(+). RuBisCO catalyzes two reactions: the carboxylation of D-ribulose 1,5-bisphosphate, the primary event in carbon dioxide fixation, as well as the oxidative fragmentation of the pentose substrate in the photorespiration process. Both reactions occur simultaneously and in competition at the same active site. This is Ribulose bisphosphate carboxylase large chain from Cichorium intybus (Chicory).